Consider the following 131-residue polypeptide: Small ribosomal subunit protein uS9 (131 aa).

This sequence belongs to the universal ribosomal protein uS9 family.

This chain is Small ribosomal subunit protein uS9, found in Glaesserella parasuis serovar 5 (strain SH0165) (Haemophilus parasuis).